We begin with the raw amino-acid sequence, 2217 residues long: DNA polymerase epsilon catalytic subunit A (2217 aa).

C2104, C2107, C2126, and C2129 together coordinate Zn(2+). The segment at C2104–C2129 adopts a CysA-type zinc-finger fold. C2160, C2163, C2175, and C2177 together coordinate [4Fe-4S] cluster. The short motif at C2160–C2177 is the CysB motif element.

This sequence belongs to the DNA polymerase type-B family. Heterotetramer. Consists of 4 subunits: POL2, DPB2, DPB3 and DPB4. It depends on [4Fe-4S] cluster as a cofactor.

It is found in the nucleus. The catalysed reaction is DNA(n) + a 2'-deoxyribonucleoside 5'-triphosphate = DNA(n+1) + diphosphate. DNA polymerase II participates in chromosomal DNA replication. This is DNA polymerase epsilon catalytic subunit A (POL2) from Candida glabrata (strain ATCC 2001 / BCRC 20586 / JCM 3761 / NBRC 0622 / NRRL Y-65 / CBS 138) (Yeast).